Here is a 437-residue protein sequence, read N- to C-terminus: Testis-specific Y-encoded-like protein 1 (437 aa).

Residues 1 to 81 (MSGLDGVKRT…QDAAGRGGTP (81 aa)) form a disordered region. Positions 11–26 (TPLQTHSIIISDQVPS) are enriched in polar residues. The segment covering 28 to 40 (QDAHQYLRLRDQS) has biased composition (basic and acidic residues). K156 is covalently cross-linked (Glycyl lysine isopeptide (Lys-Gly) (interchain with G-Cter in SUMO2)).

This sequence belongs to the nucleosome assembly protein (NAP) family. Post-translationally, ubiquitinated by the CRL2(APPBP2) complex, which recognizes the Arg-Xaa-Xaa-Gly sequence at the C-terminus, leading to its degradation. In terms of tissue distribution, expressed in testis, ovary, liver, spleen, brain, kidney, prostate, lung, liver, and heart.

Its subcellular location is the nucleus. The protein resides in the nucleolus. The protein is Testis-specific Y-encoded-like protein 1 (TSPYL1) of Homo sapiens (Human).